Reading from the N-terminus, the 380-residue chain is Alanine racemase (380 aa).

Catalysis depends on Lys34, which acts as the Proton acceptor; specific for D-alanine. N6-(pyridoxal phosphate)lysine is present on Lys34. Substrate is bound at residue Arg135. The active-site Proton acceptor; specific for L-alanine is Tyr267. Met315 contacts substrate.

This sequence belongs to the alanine racemase family. Pyridoxal 5'-phosphate is required as a cofactor.

The catalysed reaction is L-alanine = D-alanine. It functions in the pathway amino-acid biosynthesis; D-alanine biosynthesis; D-alanine from L-alanine: step 1/1. Functionally, catalyzes the interconversion of L-alanine and D-alanine. May also act on other amino acids. The chain is Alanine racemase (alr) from Lawsonia intracellularis (strain PHE/MN1-00).